We begin with the raw amino-acid sequence, 476 residues long: tRNA-2-methylthio-N(6)-dimethylallyladenosine synthase (476 aa).

Positions 5 to 122 constitute an MTTase N-terminal domain; it reads KKLYIKTWGC…LPEMINQVKG (118 aa). C14, C51, C85, C159, C163, and C166 together coordinate [4Fe-4S] cluster. Positions 145-377 constitute a Radical SAM core domain; the sequence is RAEGPSAFVS…QQRINQQAMS (233 aa). One can recognise a TRAM domain in the interval 380 to 443; it reads RAMLGSVQRI…ANSLRGKVIR (64 aa).

It belongs to the methylthiotransferase family. MiaB subfamily. Monomer. [4Fe-4S] cluster serves as cofactor.

It is found in the cytoplasm. It catalyses the reaction N(6)-dimethylallyladenosine(37) in tRNA + (sulfur carrier)-SH + AH2 + 2 S-adenosyl-L-methionine = 2-methylsulfanyl-N(6)-dimethylallyladenosine(37) in tRNA + (sulfur carrier)-H + 5'-deoxyadenosine + L-methionine + A + S-adenosyl-L-homocysteine + 2 H(+). Functionally, catalyzes the methylthiolation of N6-(dimethylallyl)adenosine (i(6)A), leading to the formation of 2-methylthio-N6-(dimethylallyl)adenosine (ms(2)i(6)A) at position 37 in tRNAs that read codons beginning with uridine. The sequence is that of tRNA-2-methylthio-N(6)-dimethylallyladenosine synthase from Photorhabdus laumondii subsp. laumondii (strain DSM 15139 / CIP 105565 / TT01) (Photorhabdus luminescens subsp. laumondii).